The following is a 373-amino-acid chain: SWI/SNF-related matrix-associated actin-dependent regulator of chromatin subfamily B member 1 (373 aa).

Residues methionine 1–serine 101 are DNA-binding.

Belongs to the SNF5 family. In terms of assembly, component of the multiprotein chromatin-remodeling complexes SWI/SNF. Component of neural progenitors-specific chromatin remodeling complex (npBAF complex) and the neuron-specific chromatin remodeling complex (nBAF complex). Component of the BAF (SWI/SNF) chromatin remodeling complex. Component of the SWI/SNF-B (PBAF) chromatin remodeling complex. Binds to double-stranded DNA.

It is found in the nucleus. Involved in chromatin-remodeling. Core component of the BAF (SWI/SNF) complex. This ATP-dependent chromatin-remodeling complex plays important roles in cell proliferation and differentiation, in cellular antiviral activities and inhibition of tumor formation. Belongs to the neural progenitors-specific chromatin remodeling complex (npBAF complex) and the neuron-specific chromatin remodeling complex (nBAF complex) and may play a role in neural development. This chain is SWI/SNF-related matrix-associated actin-dependent regulator of chromatin subfamily B member 1 (smarcb1), found in Dichotomyctere fluviatilis (Green pufferfish).